We begin with the raw amino-acid sequence, 193 residues long: Putative zinc finger protein 726P1 (193 aa).

The C2H2-type 1; degenerate zinc finger occupies 18 to 40 (YKCKKCGKTFNWSSILTNNKKIH). Residues 46–68 (YKCEECGKAFKQHSTLTTHKIIC) form a C2H2-type 2; atypical zinc finger. The C2H2-type 3; degenerate zinc-finger motif lies at 74–96 (YRCEECGKAFCQPSTLTRYKRMH). The C2H2-type 4 zinc-finger motif lies at 102–124 (YKCEECGKAFTQFSTLTKHKRIH). A C2H2-type 5; degenerate zinc finger spans residues 130-152 (YKCEESGKAFIWSSGLTEHRRVH). The segment at 158–180 (YKCEECGKALIQFSTLTRHKRIH) adopts a C2H2-type 6 zinc-finger fold.

In Homo sapiens (Human), this protein is Putative zinc finger protein 726P1 (ZNF726P1).